The chain runs to 294 residues: uncharacterized protein (294 aa).

This is an uncharacterized protein from Diadromus pulchellus idnoreovirus 1 (DpIRV-1).